Here is a 119-residue protein sequence, read N- to C-terminus: Holo-[acyl-carrier-protein] synthase (119 aa).

Mg(2+) contacts are provided by D7 and E56.

This sequence belongs to the P-Pant transferase superfamily. AcpS family. The cofactor is Mg(2+).

It is found in the cytoplasm. It carries out the reaction apo-[ACP] + CoA = holo-[ACP] + adenosine 3',5'-bisphosphate + H(+). In terms of biological role, transfers the 4'-phosphopantetheine moiety from coenzyme A to a Ser of acyl-carrier-protein. This chain is Holo-[acyl-carrier-protein] synthase, found in Chlamydia trachomatis serovar D (strain ATCC VR-885 / DSM 19411 / UW-3/Cx).